We begin with the raw amino-acid sequence, 315 residues long: ATP synthase gamma chain (315 aa).

The protein belongs to the ATPase gamma chain family. As to quaternary structure, F-type ATPases have 2 components, CF(1) - the catalytic core - and CF(0) - the membrane proton channel. CF(1) has five subunits: alpha(3), beta(3), gamma(1), delta(1), epsilon(1). CF(0) has three main subunits: a, b and c.

Its subcellular location is the cellular thylakoid membrane. In terms of biological role, produces ATP from ADP in the presence of a proton gradient across the membrane. The gamma chain is believed to be important in regulating ATPase activity and the flow of protons through the CF(0) complex. This chain is ATP synthase gamma chain, found in Synechococcus sp. (strain RCC307).